The primary structure comprises 370 residues: Cysteine-type anaerobic sulfatase-maturating enzyme (370 aa).

Positions 1–227 (MPPLSLLIKP…LKNLFDLWYE (227 aa)) constitute a Radical SAM core domain. [4Fe-4S] cluster-binding residues include Cys-15 and Cys-19. Tyr-21 is an S-adenosyl-L-methionine binding site. Cys-22 contributes to the [4Fe-4S] cluster binding site. Positions 66, 122, 134, and 195 each coordinate S-adenosyl-L-methionine. [4Fe-4S] cluster is bound by residues Cys-255, Cys-261, and Cys-276. Residue Asp-277 is the Proton acceptor of the active site. Residues Cys-317, Cys-320, Cys-326, Cys-330, and Cys-348 each coordinate [4Fe-4S] cluster.

The protein belongs to the radical SAM superfamily. Anaerobic sulfatase-maturating enzyme family. It depends on [4Fe-4S] cluster as a cofactor.

It catalyses the reaction L-cysteinyl-[sulfatase] + S-adenosyl-L-methionine + H2O = 3-oxo-L-alanyl-[sulfatase] + hydrogen sulfide + 5'-deoxyadenosine + L-methionine + 2 H(+). The protein operates within protein modification; sulfatase oxidation. Involved in 'Cys-type' sulfatase maturation under anaerobic conditions. Catalyzes the post-translational modification of cysteine into 3-oxoalanine (also known as C(alpha)-formylglycine (FGly)), by a free radical chemical mechanism initiated via the reductive cleavage of S-adenosyl-L-methionine (SAM). The polypeptide is Cysteine-type anaerobic sulfatase-maturating enzyme (Clostridium perfringens (strain 13 / Type A)).